Here is a 77-residue protein sequence, read N- to C-terminus: Cytoplasmic envelopment protein 3 (77 aa).

Residue Gly-2 is the site of N-myristoyl glycine; by host attachment.

Belongs to the herpesviridae cytoplasmic envelopment protein 3 family. Interacts with cytoplasmic envelopment protein 2; this interaction is essential for the proper localization of each protein to the assembly complex and thus for the production of infectious virus. Post-translationally, myristoylation and palmitoylation (probably on one or more of the nearby cysteines at the N-terminus) enable membrane-binding and Golgi apparatus-specific targeting and are essential for efficient packaging. In terms of processing, phosphorylated. Phosphorylation does not seem to be required for recycling to the host Golgi apparatus. Packaging is selective for underphosphorylated forms.

The protein resides in the virion tegument. Its subcellular location is the virion membrane. It is found in the host cell membrane. The protein localises to the host Golgi apparatus membrane. Functionally, plays an important role in the cytoplasmic envelopment of tegument proteins and capsids during the assembly and egress processes. Also participates in viral entry at the fusion step probably by regulating the core fusion machinery. The polypeptide is Cytoplasmic envelopment protein 3 (U71) (Human herpesvirus 6A (strain Uganda-1102) (HHV-6 variant A)).